Here is a 436-residue protein sequence, read N- to C-terminus: Mitochondrial substrate carrier family protein Y (436 aa).

The segment at 1–102 (MENNNKNINT…NINNNNINKK (102 aa)) is disordered. The Mitochondrial intermembrane segment spans residues 1-137 (MENNNKNINT…GGFLAGLSRN (137 aa)). Solcar repeat units lie at residues 135–226 (SRNV…TLKY) and 236–334 (HDTL…LKKQ). Residues 138–158 (VTRIIGSFSSGMAEESAGYPL) traverse the membrane as a helical segment. At 159–194 (DLIKTRIQLSQSGVSGGGGTNTSIIKIFKDVIKTEG) the chain is on the mitochondrial matrix side. The helical transmembrane segment at 195–215 (VIGLFKGLSSPLILSALVTAI) threads the bilayer. Over 216–238 (QFGLFEDTLKYFRKHQYFKNHDT) the chain is Mitochondrial intermembrane. The helical transmembrane segment at 239–259 (LSLLFSGSIAGFAQSFITCPV) threads the bilayer. The Mitochondrial matrix portion of the chain corresponds to 260-313 (DLVKIQMQIQGIPSSQPNSNNNNNNNKAKGNSYFTKLIYREKGLLGFYQGLSPT). The chain crosses the membrane as a helical span at residues 314–334 (LFRDVPGLAIFFTTYETLKKQ). The Mitochondrial intermembrane portion of the chain corresponds to 335 to 347 (FGQPELSTQSPTE). A helical transmembrane segment spans residues 348 to 368 (FIKSFIPIVLSGGSAGVFYHG). Residues 350 to 436 (KSFIPIVLSG…FLVYEMVINL (87 aa)) form a Solcar 3 repeat. The Mitochondrial matrix segment spans residues 369–413 (LTHPFDIAKTLIQSDRSATKYKGTFDCLKQVYQNQGPKSLFKGFS). The helical transmembrane segment at 414–434 (AVAIKSFQSNAVGFLVYEMVI) threads the bilayer. Residues 435–436 (NL) are Mitochondrial intermembrane-facing.

Belongs to the mitochondrial carrier (TC 2.A.29) family.

Its subcellular location is the mitochondrion inner membrane. Its function is as follows. Mitochondrial solute carriers shuttle metabolites, nucleotides, and cofactors through the mitochondrial inner membrane. The chain is Mitochondrial substrate carrier family protein Y (mcfY) from Dictyostelium discoideum (Social amoeba).